The chain runs to 492 residues: Catalase isozyme 1 (492 aa).

Residues histidine 65 and asparagine 138 contribute to the active site. Tyrosine 348 contributes to the heme binding site.

It belongs to the catalase family. In terms of assembly, homotetramer. The cofactor is heme. In terms of tissue distribution, scutella, milky endosperm of immature kernels, leaves and epicotyls.

The protein resides in the peroxisome. It carries out the reaction 2 H2O2 = O2 + 2 H2O. Occurs in almost all aerobically respiring organisms and serves to protect cells from the toxic effects of hydrogen peroxide. The polypeptide is Catalase isozyme 1 (CAT1) (Zea mays (Maize)).